We begin with the raw amino-acid sequence, 686 residues long: Zinc finger protein 7 (686 aa).

Residues 4–76 enclose the KRAB domain; the sequence is VTFGDVAVHF…DLQGAEGTEA (73 aa). Glycyl lysine isopeptide (Lys-Gly) (interchain with G-Cter in SUMO2) cross-links involve residues lysine 81 and lysine 101. A phosphoserine mark is found at serine 126 and serine 138. 6 consecutive C2H2-type zinc fingers follow at residues 223-245, 250-272, 278-300, 306-328, 334-356, and 362-384; these read SRCQ…NNCH, YECA…QRIH, FKCT…QRIH, YRCE…QRIH, YGCR…QRTH, and YPCK…QRMH. Glycyl lysine isopeptide (Lys-Gly) (interchain with G-Cter in SUMO2) cross-links involve residues lysine 279 and lysine 292. Lysine 393 is covalently cross-linked (Glycyl lysine isopeptide (Lys-Gly) (interchain with G-Cter in SUMO2)). C2H2-type zinc fingers lie at residues 413–435, 441–463, 469–491, 497–519, 525–547, 553–575, 581–603, 634–656, and 662–684; these read FKCD…QLIH, YKCN…QRTH, FKCD…QRIH, YVCN…QRIH, YECL…QRVH, YKCN…QIIH, YECS…QRIH, HQCE…QRIH, and YKCN…QKIH.

The protein belongs to the krueppel C2H2-type zinc-finger protein family.

It localises to the nucleus. May be involved in transcriptional regulation. This is Zinc finger protein 7 (ZNF7) from Pongo abelii (Sumatran orangutan).